A 294-amino-acid chain; its full sequence is RNA exonuclease 4 (294 aa).

The segment covering 1–13 (MVLSSNWLSLQKS) has biased composition (polar residues). Positions 1 to 56 (MVLSSNWLSLQKSTDSDSVNKNKGGKKTKSNSKKRTVSVKKDKQYVDKKKKNGTGS) are disordered. Basic residues predominate over residues 23-38 (KGGKKTKSNSKKRTVS). Positions 119-271 (YVSMDCEFVG…EDARATMLLY (153 aa)) constitute an Exonuclease domain.

It belongs to the REXO4 family.

Its subcellular location is the nucleus. Exoribonuclease involved in ribosome biosynthesis. Involved in the processing of ITS1, the internal transcribed spacer localized between the 18S and 5.8S rRNAs. This is RNA exonuclease 4 (REX4) from Kluyveromyces lactis (strain ATCC 8585 / CBS 2359 / DSM 70799 / NBRC 1267 / NRRL Y-1140 / WM37) (Yeast).